A 250-amino-acid polypeptide reads, in one-letter code: Phosphoribosylaminoimidazole-succinocarboxamide synthase (250 aa).

It belongs to the SAICAR synthetase family.

The enzyme catalyses 5-amino-1-(5-phospho-D-ribosyl)imidazole-4-carboxylate + L-aspartate + ATP = (2S)-2-[5-amino-1-(5-phospho-beta-D-ribosyl)imidazole-4-carboxamido]succinate + ADP + phosphate + 2 H(+). The protein operates within purine metabolism; IMP biosynthesis via de novo pathway; 5-amino-1-(5-phospho-D-ribosyl)imidazole-4-carboxamide from 5-amino-1-(5-phospho-D-ribosyl)imidazole-4-carboxylate: step 1/2. The protein is Phosphoribosylaminoimidazole-succinocarboxamide synthase of Bifidobacterium adolescentis (strain ATCC 15703 / DSM 20083 / NCTC 11814 / E194a).